The following is a 155-amino-acid chain: Protein Smg homolog (155 aa).

It belongs to the Smg family.

The protein is Protein Smg homolog of Azoarcus sp. (strain BH72).